The chain runs to 729 residues: Putative cyclic nucleotide-gated ion channel 19 (729 aa).

The Cytoplasmic portion of the chain corresponds to 1–172; the sequence is MAHTRTFTSR…SKFVQVWTRV (172 aa). Residues 52–82 are disordered; the sequence is SGPIHSTRRTEPLFSPSPQESPDSSSTVDVP. Positions 67–81 are enriched in low complexity; sequence PSPQESPDSSSTVDV. Residues 173–193 form a helical membrane-spanning segment; the sequence is LAFSSLVAIFIDPLFFFLLLI. Residues 194 to 208 lie on the Extracellular side of the membrane; that stretch reads QQDNKCIAIDWRATK. Residues 209-229 traverse the membrane as a helical segment; it reads VLVSLRSITDLIFFINILLQF. Residues 230-261 lie on the Cytoplasmic side of the membrane; that stretch reads RLAYVAPESRIVGAGQLVDHPRKIARHYFRGK. The chain crosses the membrane as a helical span at residues 262-282; sequence FLLDMFIVFPIPQIMILRIIP. Over 283-295 the chain is Extracellular; sequence LHLGTRREESEKQ. Residues 296-316 traverse the membrane as a helical segment; sequence ILRATVLFQYIPKLYRLLPLL. At 317–332 the chain is on the cytoplasmic side; it reads AGQTSTGFIFESAWAN. A helical membrane pass occupies residues 333 to 353; it reads FVINLLTFMLAGHAVGSCWYL. Topologically, residues 354 to 451 are extracellular; the sequence is SALQRVKKCM…STLAGNLSPS (98 aa). Residues 452–472 form a helical membrane-spanning segment; sequence YSVGEVFFTMGIIGLGLLLFA. The Cytoplasmic segment spans residues 473–729; it reads RLIGNMHNFL…LNTAHSNSNR (257 aa). A nucleoside 3',5'-cyclic phosphate-binding positions include 560-677 and Glu-625; that span reads IFSL…VTSL. The tract at residues 678 to 694 is calmodulin-binding; it reads FSRFLRSHRVQGAIRYE. The 30-residue stretch at 699–728 folds into the IQ domain; that stretch reads RLRAAMQIQVAWRYRKRQLQRLNTAHSNSN.

This sequence belongs to the cyclic nucleotide-gated cation channel (TC 1.A.1.5) family. As to quaternary structure, homotetramer or heterotetramer.

Its subcellular location is the cell membrane. Its function is as follows. Putative cyclic nucleotide-gated ion channel. In Arabidopsis thaliana (Mouse-ear cress), this protein is Putative cyclic nucleotide-gated ion channel 19 (CNGC19).